The following is a 537-amino-acid chain: MEHKKAALLDLTQYGLTGVTDVLRNPSYEQLFEEETRPDLEGYERGVMTELGSVAVDTGIFTGRSPKDKYIVKDDTTKDTLWWSDQGKNDNKAITPAVWDDLKSLVTTQLSGKRLFVIDGFCGANPDTRLNVRIITEVAWQAHFVKNMFIRPTEAELENFEPDFVVMNGAKVTNPNYEKHGLNSENFVAFNLTERVQIIGGTWYGGEMKKGMFAMMNYLLPLKGIASMHCSANVGEKGDVAVFFGLSGTGKTTLSTDPKRQLIGDDEHGWDDDGIFNFEGGCYAKTIRLSKEAEPDIYNAIRRDALLENVTVRSDSSIDFNDGSKTENTRVSYPIYHIDNIVKPVSKAGHAKKVIFLTADAFGVLPPVAKLTPEQTKYHFLSGFTAKLAGTERGITEPTPTFSAAFGAAFLTLHPTQYAEVLVKRMEAAGAEAYIVNTGWNGTGKRISIQDTRGIIDAILDGSIDQAKTKNIPVFNLEVPTSLPGVDASILDPRDTYTDPLQWDSKAEDLAQRFIKNFAQYTDNEEGKALVKAGPQL.

3 residues coordinate substrate: Arg-64, Tyr-204, and Lys-210. ATP contacts are provided by residues Lys-210, His-229, and 245–253 (GLSGTGKTT). Mn(2+) contacts are provided by Lys-210 and His-229. Asp-266 serves as a coordination point for Mn(2+). ATP contacts are provided by residues Glu-294, Arg-330, 446–447 (RI), and Thr-452. Arg-330 provides a ligand contact to substrate.

It belongs to the phosphoenolpyruvate carboxykinase (ATP) family. Monomer. It depends on Mn(2+) as a cofactor.

The protein resides in the cytoplasm. The catalysed reaction is oxaloacetate + ATP = phosphoenolpyruvate + ADP + CO2. The protein operates within carbohydrate biosynthesis; gluconeogenesis. Functionally, involved in the gluconeogenesis. Catalyzes the conversion of oxaloacetate (OAA) to phosphoenolpyruvate (PEP) through direct phosphoryl transfer between the nucleoside triphosphate and OAA. The sequence is that of Phosphoenolpyruvate carboxykinase (ATP) from Aliivibrio fischeri (strain ATCC 700601 / ES114) (Vibrio fischeri).